Here is a 123-residue protein sequence, read N- to C-terminus: Beta-defensin 126 (123 aa).

An N-terminal signal peptide occupies residues 1-20 (MKSLLFTLAVFMLLAQLVSG). Residues 21–63 (NLYVKRCLNDIGICKKTCKPEEVRSEHGWVMCGKRKACCVPAD) are in vitro binds to LPS, mediates antimicrobial activity and inhibits LPS-mediated inflammation. Disulfide bonds link C27/C58, C34/C52, and C38/C59.

It belongs to the beta-defensin family. In terms of assembly, homodimer or homooligomer; disulfide-linked. Post-translationally, O-glycosylated; glycans contain sialic acids alpha(2,3)-linked to galactose and N-acetylgalactosamine. The C-terminal O-glycosylation contributes substantially to the sperm glyocalyx. In terms of tissue distribution, high-level and epididymis-specific expression. Detected in epithelial cells lining the efferent ductules, initial segment, and cauda regions of the epididymis, but not on spermatozoa.

It localises to the secreted. Its function is as follows. Highly glycosylated atypical beta-defensin involved in several aspects of sperm function. Facilitates sperm transport in the female reproductive tract and contributes to sperm protection against immunodetection; both functions are probably implicating the negative surface charge provided by its O-linked oligosaccharides in the sperm glycocalyx. Involved in binding of sperm to oviductal epithelial cells to form a sperm reservoir until ovulation. Release from the sperm surface during capacitation and ovaluation by an elevation of oviductal fluid pH is unmasking other surface components and allows sperm to penetrate the cumulus matrix and bind to the zona pellucida of the oocyte. In vitro has antimicrobial activity and may inhibit LPS-mediated inflammation. This chain is Beta-defensin 126 (DEFB126), found in Macaca fascicularis (Crab-eating macaque).